A 735-amino-acid polypeptide reads, in one-letter code: Dolichyl-diphosphooligosaccharide--protein glycosyltransferase subunit STT3B (735 aa).

The Cytoplasmic portion of the chain corresponds to 1 to 38; it reads MGGKSEPAKSESMATKPDLLNTSFFSFKSLKLKTKQQE. Residues 39–59 form a helical membrane-spanning segment; sequence LLLRISILGLVYILAFIARLF. Residues 60–142 are Lumenal-facing; the sequence is SVLRYESMIH…VHIREVCVLT (83 aa). The DXD motif 1 motif lies at 70-72; sequence EFD. D72 contacts Mn(2+). Residues 143–161 form a helical membrane-spanning segment; sequence APFFASNTTLVAYFFGKEL. The Cytoplasmic portion of the chain corresponds to 162-163; sequence WD. The helical transmembrane segment at 164–181 threads the bilayer; sequence TGAGLVAAVLIAICPGYI. Over 182–192 the chain is Lumenal; the sequence is SRSVAGSYDNE. Mn(2+) is bound by residues D190 and E192. A DXD motif 2 motif is present at residues 190-192; the sequence is DNE. A helical membrane pass occupies residues 193-212; that stretch reads AVAIFALLLTFYLFVKAVNT. Over 213-214 the chain is Cytoplasmic; sequence GS. Residues 215–229 form a helical membrane-spanning segment; it reads LAWALASAFGYFYMV. Residues 230–234 lie on the Lumenal side of the membrane; that stretch reads SAWGG. A helical transmembrane segment spans residues 235-251; that stretch reads YVFIINLVPLYVLVLLI. Residues 252–256 are Cytoplasmic-facing; that stretch reads TGRYS. A helical membrane pass occupies residues 257-282; the sequence is MRLYIAYNCMYILGMLLAMQIRFVGF. Residues 283–290 are Lumenal-facing; the sequence is QHVQSGEH. Residues 291-310 traverse the membrane as a helical segment; sequence MGAMGVFLLMQVFYFLDWVK. The Cytoplasmic segment spans residues 311–326; that stretch reads YQLNDTKLFQTFLRIT. The chain crosses the membrane as a helical span at residues 327–347; it reads VTSAILVGGVAVGVGTASGYI. At 348–380 the chain is on the lumenal side; that stretch reads SPWTGRFYSLLDPTYAKDHIPIIASVSEHQPTA. An SVSE motif motif is present at residues 372–375; sequence SVSE. Residues 381–403 traverse the membrane as a helical segment; that stretch reads WSSFMFDYHILLFLFPAGLYFCF. Over 404 to 409 the chain is Cytoplasmic; the sequence is KRLTDA. The chain crosses the membrane as a helical span at residues 410-426; the sequence is TIFIVMYGLTSLYFAGV. Residues 427-430 lie on the Lumenal side of the membrane; that stretch reads MVRL. R429 provides a ligand contact to dolichyl diphosphooligosaccharide. Residues 431–452 traverse the membrane as a helical segment; the sequence is ILVATPAVCLISAIAVSATIKN. Topologically, residues 453-494 are cytoplasmic; it reads LTSLLRTKQKVSQTGSTKGAGSSKASSKVTLDQSQPFQKNGA. A helical membrane pass occupies residues 495–515; sequence IALLVGVFYLLSRYAIHCTWV. Over 516-735 the chain is Lumenal; sequence TAEAYSSPSI…YRVKPPTNRL (220 aa). Residues 562-564 form an interacts with target acceptor peptide in protein substrate region; the sequence is WWD. The WWDYG motif motif lies at 562–566; the sequence is WWDYG. Y567 is a dolichyl diphosphooligosaccharide binding site. 2 N-linked (GlcNAc...) asparagine glycosylation sites follow: N574 and N581. N-linked (GlcNAc...) (high mannose) asparagine glycosylation is present at N585. Positions 629–636 match the DK motif motif; the sequence is DINKFLWM.

Belongs to the STT3 family. In terms of assembly, component of the oligosaccharyltransferase (OST) complex. Requires Mg(2+) as cofactor. The cofactor is Mn(2+). In terms of tissue distribution, expressed preferentially in the root but also in the shoot.

The protein resides in the endoplasmic reticulum membrane. The enzyme catalyses a di-trans,poly-cis-dolichyl diphosphooligosaccharide + L-asparaginyl-[protein] = N(4)-(oligosaccharide-(1-&gt;4)-N-acetyl-beta-D-glucosaminyl-(1-&gt;4)-N-acetyl-beta-D-glucosaminyl)-L-asparaginyl-[protein] + a di-trans,poly-cis-dolichyl diphosphate + H(+). It participates in protein modification; protein glycosylation. Functionally, catalytic subunit of the oligosaccharyl transferase (OST) complex that catalyzes the initial transfer of a defined glycan (Glc(3)Man(9)GlcNAc(2) in eukaryotes) from the lipid carrier dolichol-pyrophosphate to an asparagine residue within an Asn-X-Ser/Thr consensus motif in nascent polypeptide chains, the first step in protein N-glycosylation. N-glycosylation occurs cotranslationally and the complex associates with the Sec61 complex at the channel-forming translocon complex that mediates protein translocation across the endoplasmic reticulum (ER). All subunits are required for a maximal enzyme activity. This subunit contains the active site and the acceptor peptide and donor lipid-linked oligosaccharide (LLO) binding pockets. In Arabidopsis thaliana (Mouse-ear cress), this protein is Dolichyl-diphosphooligosaccharide--protein glycosyltransferase subunit STT3B (STT3B).